The following is a 55-amino-acid chain: Glycine-rich antimicrobial peptide Pg-AMP (55 aa).

A compositionally biased stretch (gly residues) spans 18-39 (GYGGYGGGRYGGGYGSGRGQPV). Positions 18–55 (GYGGYGGGRYGGGYGSGRGQPVGQGVERSHDDNRNQPR) are disordered. The span at 44–55 (ERSHDDNRNQPR) shows a compositional bias: basic and acidic residues.

Monomer and homodimer. Might act by homodimer formation.

Its function is as follows. Has antibacterial activity against the Gram-negative bacteria Klebsiella sp., Proteus sp., E.coli ATCC 8739 (MIC=72 ug/ml) and K.pneumoniae (MIC=32 ug/ml). Has no activity against the Gram-negative bacterium S.typhimurium or the Gram-positive bacterium S.aureus. Does not have antifungal activity against the human and plant pathogenic fungi F.oxysporum, A.fumigatus and R.solani. In Psidium guajava (Guava), this protein is Glycine-rich antimicrobial peptide Pg-AMP.